Reading from the N-terminus, the 259-residue chain is Small ribosomal subunit protein eS1 (259 aa).

Ala-2 bears the N-acetylalanine; partial mark.

It belongs to the eukaryotic ribosomal protein eS1 family. Component of the small ribosomal subunit. Mature ribosomes consist of a small (40S) and a large (60S) subunit. The 40S subunit contains about 33 different proteins and 1 molecule of RNA (18S). The 60S subunit contains about 49 different proteins and 3 molecules of RNA (25S, 5.8S and 5S).

It localises to the cytoplasm. The polypeptide is Small ribosomal subunit protein eS1 (Cryptococcus neoformans var. neoformans serotype D (strain B-3501A) (Filobasidiella neoformans)).